The sequence spans 147 residues: Protein-export protein SecB (147 aa).

It belongs to the SecB family. As to quaternary structure, homotetramer, a dimer of dimers. One homotetramer interacts with 1 SecA dimer.

It localises to the cytoplasm. Its function is as follows. One of the proteins required for the normal export of preproteins out of the cell cytoplasm. It is a molecular chaperone that binds to a subset of precursor proteins, maintaining them in a translocation-competent state. It also specifically binds to its receptor SecA. This Neisseria meningitidis serogroup A / serotype 4A (strain DSM 15465 / Z2491) protein is Protein-export protein SecB.